The sequence spans 510 residues: NAD(P)H-quinone oxidoreductase subunit 2 B, chloroplastic (510 aa).

13 helical membrane passes run 24 to 44 (LLLFHGSFIFPECILIFGLIL), 57 to 77 (IPWLYFISSTSLVMSITALLF), 99 to 119 (IFQFLILLCSTLCIPLSVEYI), 124 to 144 (MAITEFLLFVLTATLGGMFLC), 150 to 170 (ITIFVAPECFSLCSYLLSGYT), 183 to 203 (YLLMGGASSSILVHGFSWLYG), 227 to 247 (PGISIALIFITVGIGFKLSPA), 295 to 315 (WHLLLEILAILSMILGNLIAI), 323 to 343 (MLAYSSIGQIGYVIIGIIVGD), 347 to 367 (GYASMITYMLFYISMNLGTFA), 395 to 415 (ALSSALCLLSLGGLPPLAGFF), 418 to 438 (LHLFWCGWQAGLYFLVSIGLL), and 484 to 504 (MIVCVIASTIPGISMNPIIAI).

This sequence belongs to the complex I subunit 2 family. As to quaternary structure, NDH is composed of at least 16 different subunits, 5 of which are encoded in the nucleus.

It localises to the plastid. Its subcellular location is the chloroplast thylakoid membrane. The enzyme catalyses a plastoquinone + NADH + (n+1) H(+)(in) = a plastoquinol + NAD(+) + n H(+)(out). It catalyses the reaction a plastoquinone + NADPH + (n+1) H(+)(in) = a plastoquinol + NADP(+) + n H(+)(out). Its function is as follows. NDH shuttles electrons from NAD(P)H:plastoquinone, via FMN and iron-sulfur (Fe-S) centers, to quinones in the photosynthetic chain and possibly in a chloroplast respiratory chain. The immediate electron acceptor for the enzyme in this species is believed to be plastoquinone. Couples the redox reaction to proton translocation, and thus conserves the redox energy in a proton gradient. This chain is NAD(P)H-quinone oxidoreductase subunit 2 B, chloroplastic, found in Liriodendron tulipifera (Tuliptree).